We begin with the raw amino-acid sequence, 92 residues long: Promotilin (92 aa).

Residues 12 to 49 (RMQEKERNRGQKKSLGLQQRSEEVGSLDPTEAAEEEGK) are disordered.

Belongs to the motilin family.

The protein resides in the secreted. Its function is as follows. Plays an important role in the regulation of interdigestive gastrointestinal motility and indirectly causes rhythmic contraction of duodenal and colonic smooth muscle. In Equus caballus (Horse), this protein is Promotilin (MLN).